The chain runs to 225 residues: NAD(P)H-quinone oxidoreductase subunit K, chloroplastic (225 aa).

[4Fe-4S] cluster contacts are provided by C43, C44, C108, and C139.

It belongs to the complex I 20 kDa subunit family. In terms of assembly, NDH is composed of at least 16 different subunits, 5 of which are encoded in the nucleus. [4Fe-4S] cluster serves as cofactor.

It is found in the plastid. The protein localises to the chloroplast thylakoid membrane. It catalyses the reaction a plastoquinone + NADH + (n+1) H(+)(in) = a plastoquinol + NAD(+) + n H(+)(out). The enzyme catalyses a plastoquinone + NADPH + (n+1) H(+)(in) = a plastoquinol + NADP(+) + n H(+)(out). Functionally, NDH shuttles electrons from NAD(P)H:plastoquinone, via FMN and iron-sulfur (Fe-S) centers, to quinones in the photosynthetic chain and possibly in a chloroplast respiratory chain. The immediate electron acceptor for the enzyme in this species is believed to be plastoquinone. Couples the redox reaction to proton translocation, and thus conserves the redox energy in a proton gradient. The polypeptide is NAD(P)H-quinone oxidoreductase subunit K, chloroplastic (Guizotia abyssinica (Niger)).